Consider the following 1071-residue polypeptide: Fused isobutyryl-CoA mutase (1071 aa).

The region spanning 12–149 (PVRFVTSAAL…QTCDVDLTGE (138 aa)) is the B12-binding domain. His25 lines the adenosylcob(III)alamin pocket. The interval 153-400 (VEAVLAGERT…YQHLLELLGA (248 aa)) is GTPase chaperone MeaI. 203 to 208 (GSGKSS) provides a ligand contact to GTP. Positions 207, 232, 233, and 246 each coordinate Mg(2+). Arg249 is a GTP binding site. Mg(2+) is bound by residues Glu293 and Thr294. 340–343 (NKFE) serves as a coordination point for GTP. A linker region spans residues 401–558 (RGLPVDEGVL…RSENLPGHFP (158 aa)). The substrate site is built by Phe566, Arg601, Arg707, Tyr751, Ser800, Arg835, and Lys840. 2 residues coordinate GTP: Glu952 and Asn1070.

This sequence belongs to the IcmF family. As to quaternary structure, homodimer. Adenosylcob(III)alamin is required as a cofactor. It depends on Mg(2+) as a cofactor.

The enzyme catalyses 2-methylpropanoyl-CoA = butanoyl-CoA. It catalyses the reaction GTP + H2O = GDP + phosphate + H(+). In terms of biological role, catalyzes the reversible interconversion of isobutyryl-CoA and n-butyryl-CoA, using radical chemistry. Also exhibits GTPase activity, associated with its G-protein domain (MeaI) that functions as a chaperone that assists cofactor delivery and proper holo-enzyme assembly. Does not exhibit methylmalonyl-CoA mutase (MCM) activity. The sequence is that of Fused isobutyryl-CoA mutase from Nocardia farcinica (strain IFM 10152).